Here is a 152-residue protein sequence, read N- to C-terminus: Interleukin-2 (152 aa).

An N-terminal signal peptide occupies residues 1-20; that stretch reads MYRMQLLSCIALTLALVANG. A glycan (O-linked (GalNAc...) threonine) is linked at T23. The cysteines at positions 78 and 126 are disulfide-linked.

It belongs to the IL-2 family.

It localises to the secreted. In terms of biological role, cytokine produced by activated CD4-positive helper T-cells and to a lesser extend activated CD8-positive T-cells and natural killer (NK) cells that plays pivotal roles in the immune response and tolerance. Binds to a receptor complex composed of either the high-affinity trimeric IL-2R (IL2RA/CD25, IL2RB/CD122 and IL2RG/CD132) or the low-affinity dimeric IL-2R (IL2RB and IL2RG). Interaction with the receptor leads to oligomerization and conformation changes in the IL-2R subunits resulting in downstream signaling starting with phosphorylation of JAK1 and JAK3. In turn, JAK1 and JAK3 phosphorylate the receptor to form a docking site leading to the phosphorylation of several substrates including STAT5. This process leads to activation of several pathways including STAT, phosphoinositide-3-kinase/PI3K and mitogen-activated protein kinase/MAPK pathways. Functions as a T-cell growth factor and can increase NK-cell cytolytic activity as well. Promotes strong proliferation of activated B-cells and subsequently immunoglobulin production. Plays a pivotal role in regulating the adaptive immune system by controlling the survival and proliferation of regulatory T-cells, which are required for the maintenance of immune tolerance. Moreover, participates in the differentiation and homeostasis of effector T-cell subsets, including Th1, Th2, Th17 as well as memory CD8-positive T-cells. This Orcinus orca (Killer whale) protein is Interleukin-2 (IL2).